Reading from the N-terminus, the 182-residue chain is Putative pre-16S rRNA nuclease (182 aa).

Belongs to the YqgF nuclease family.

The protein localises to the cytoplasm. Functionally, could be a nuclease involved in processing of the 5'-end of pre-16S rRNA. This Corynebacterium aurimucosum (strain ATCC 700975 / DSM 44827 / CIP 107346 / CN-1) (Corynebacterium nigricans) protein is Putative pre-16S rRNA nuclease.